A 1369-amino-acid polypeptide reads, in one-letter code: Serine/threonine-protein kinase SIK3 (1369 aa).

The interval 26–55 is disordered; it reads LLPPPAAGPPAAPAAVPPAAVPARPTAPAS. A compositionally biased stretch (pro residues) spans 27–45; that stretch reads LPPPAAGPPAAPAAVPPAA. Low complexity predominate over residues 46–55; that stretch reads VPARPTAPAS. In terms of domain architecture, Protein kinase spans 66–317; that stretch reads YEIDRTIGKG…MEQICRHKWM (252 aa). Thr71 bears the Phosphothreonine mark. ATP is bound by residues 72 to 80 and Lys95; that span reads IGKGNFAVV. Asp188 (proton acceptor) is an active-site residue. Residue Thr221 is modified to Phosphothreonine. The 41-residue stretch at 344–384 folds into the UBA domain; that stretch reads PLNDDVLLAMEDMGLDKERTLQSLRSDAYDHYSAIYSLLCD. A Phosphothreonine modification is found at Thr469. Phosphoserine occurs at positions 551, 591, 592, 674, and 695. Positions 775 to 821 are disordered; the sequence is IQPSSPPPNHPSNHLFRQPSNSPPPVSSAMITSHGATSPSQFQGLPS. Over residues 803–818 the composition is skewed to polar residues; the sequence is AMITSHGATSPSQFQG. Ser914 is subject to Phosphoserine. Residues 942-993 form a disordered region; that stretch reads LFSDQSRGSPSSYSPSTGVGFPPTQALKVPPLDQFPTFPPSAQQQPPHYTTS. Over residues 944–957 the composition is skewed to low complexity; that stretch reads SDQSRGSPSSYSPS. A compositionally biased stretch (polar residues) spans 981 to 993; that stretch reads PSAQQQPPHYTTS. Ser1026 carries the post-translational modification Phosphoserine. An Omega-N-methylarginine modification is found at Arg1034. The tract at residues 1314–1338 is disordered; it reads DEEDEECGVSLGHEHPGLGDGSQHL.

Belongs to the protein kinase superfamily. CAMK Ser/Thr protein kinase family. SNF1 subfamily. In terms of assembly, binds to and is activated by YWHAZ when phosphorylated on Thr-221. Interacts with 14-3-3 proteins. Interacts with HDAC4; this interaction leads to HDAC4 retention in the cytoplasm. Interacts with DEPTOR, MLST8/GbetaL, RICTOR and RPTOR. It depends on Mg(2+) as a cofactor. Phosphorylated at Thr-221 by STK11/LKB1 in complex with STE20-related adapter-alpha (STRADA) pseudo kinase and CAB39. As to expression, expressed in hypertrophic chondrocytes in the growth plate.

The protein localises to the cytoplasm. The catalysed reaction is L-seryl-[protein] + ATP = O-phospho-L-seryl-[protein] + ADP + H(+). It catalyses the reaction L-threonyl-[protein] + ATP = O-phospho-L-threonyl-[protein] + ADP + H(+). With respect to regulation, activated by phosphorylation on Thr-221. In terms of biological role, positive regulator of mTOR signaling that functions by triggering the degradation of DEPTOR, an mTOR inhibitor. Required for chondrocyte hypertrophy during skeletogenesis. Negatively regulates cAMP signaling pathway possibly by acting on CRTC2/TORC2 and CRTC3/TORC3. Prevents HDAC4 translocation to the nucleus. This is Serine/threonine-protein kinase SIK3 (Sik3) from Mus musculus (Mouse).